The primary structure comprises 303 residues: Ribosomal RNA small subunit methyltransferase H (303 aa).

Residues 33–35, D52, F79, D97, and Q104 contribute to the S-adenosyl-L-methionine site; that span reads GGH.

The protein belongs to the methyltransferase superfamily. RsmH family.

The protein resides in the cytoplasm. It catalyses the reaction cytidine(1402) in 16S rRNA + S-adenosyl-L-methionine = N(4)-methylcytidine(1402) in 16S rRNA + S-adenosyl-L-homocysteine + H(+). Functionally, specifically methylates the N4 position of cytidine in position 1402 (C1402) of 16S rRNA. This Wolinella succinogenes (strain ATCC 29543 / DSM 1740 / CCUG 13145 / JCM 31913 / LMG 7466 / NCTC 11488 / FDC 602W) (Vibrio succinogenes) protein is Ribosomal RNA small subunit methyltransferase H.